Here is a 187-residue protein sequence, read N- to C-terminus: Peptide deformylase (187 aa).

The Fe cation site is built by Cys107 and His149. Residue Glu150 is part of the active site. A Fe cation-binding site is contributed by His153.

This sequence belongs to the polypeptide deformylase family. Fe(2+) serves as cofactor.

The catalysed reaction is N-terminal N-formyl-L-methionyl-[peptide] + H2O = N-terminal L-methionyl-[peptide] + formate. Functionally, removes the formyl group from the N-terminal Met of newly synthesized proteins. Requires at least a dipeptide for an efficient rate of reaction. N-terminal L-methionine is a prerequisite for activity but the enzyme has broad specificity at other positions. This is Peptide deformylase from Microchaete diplosiphon (Fremyella diplosiphon).